Here is a 209-residue protein sequence, read N- to C-terminus: Cyclin-dependent kinase inhibitor 2 (209 aa).

Positions 1–32 (MAAVRRRERDVVEENGVTTTTVKRRKMEEEVD) are required for nuclear localization.

It belongs to the CDI family. ICK/KRP subfamily. As to quaternary structure, specifically interacts with CDKA-1, but not with CDKB1-1. In terms of processing, phosphorylated.

The protein localises to the nucleus. It is found in the nucleoplasm. Its function is as follows. Binds and inhibits CYCD2-1/CDKA-1 complex kinase activity. Regulates cell division which is crucial for plant growth, development and morphogenesis. May regulate early lateral root initiation by blocking the G1/S phase transition. Controls the mitosis-to-endocycle transition and the onset of the endoreduplication cycle during leaf development through inhibition of mitotic CDKA-1 kinase complexes. Specifically targets CDKA-1. In Arabidopsis thaliana (Mouse-ear cress), this protein is Cyclin-dependent kinase inhibitor 2 (KRP2).